Reading from the N-terminus, the 212-residue chain is Putative 3-methyladenine DNA glycosylase (212 aa).

This sequence belongs to the DNA glycosylase MPG family.

In Frankia casuarinae (strain DSM 45818 / CECT 9043 / HFP020203 / CcI3), this protein is Putative 3-methyladenine DNA glycosylase.